A 146-amino-acid chain; its full sequence is Histone H2B (146 aa).

The span at 1-16 shows a compositional bias: basic and acidic residues; that stretch reads MAPRADKKPAEKKPGA. A disordered region spans residues 1 to 52; that stretch reads MAPRADKKPAEKKPGAEKTPVAEKAPAEKKPRAGKKLPRDAGAAGDKKKKRA. N6-acetyllysine is present on residues Lys7, Lys35, and Lys36. Residue Lys142 forms a Glycyl lysine isopeptide (Lys-Gly) (interchain with G-Cter in ubiquitin) linkage.

It belongs to the histone H2B family. In terms of assembly, the nucleosome is a histone octamer containing two molecules each of H2A, H2B, H3 and H4 assembled in one H3-H4 heterotetramer and two H2A-H2B heterodimers. The octamer wraps approximately 147 bp of DNA. Can be acetylated to form H2BK6ac, H2BK33ac and H2BK34ac. In terms of processing, monoubiquitinated to form H2BK143ub1; may give a specific tag for epigenetic transcriptional activation.

The protein resides in the nucleus. It localises to the chromosome. Core component of nucleosome. Nucleosomes wrap and compact DNA into chromatin, limiting DNA accessibility to the cellular machineries which require DNA as a template. Histones thereby play a central role in transcription regulation, DNA repair, DNA replication and chromosomal stability. DNA accessibility is regulated via a complex set of post-translational modifications of histones, also called histone code, and nucleosome remodeling. The protein is Histone H2B (HIS2B) of Nicotiana tabacum (Common tobacco).